Here is a 186-residue protein sequence, read N- to C-terminus: Ribosome-recycling factor (186 aa).

Belongs to the RRF family.

The protein localises to the cytoplasm. Responsible for the release of ribosomes from messenger RNA at the termination of protein biosynthesis. May increase the efficiency of translation by recycling ribosomes from one round of translation to another. The sequence is that of Ribosome-recycling factor from Chlorobium luteolum (strain DSM 273 / BCRC 81028 / 2530) (Pelodictyon luteolum).